Here is a 127-residue protein sequence, read N- to C-terminus: Large ribosomal subunit protein uL22 (127 aa).

The protein belongs to the universal ribosomal protein uL22 family. Part of the 50S ribosomal subunit.

In terms of biological role, this protein binds specifically to 23S rRNA; its binding is stimulated by other ribosomal proteins, e.g. L4, L17, and L20. It is important during the early stages of 50S assembly. It makes multiple contacts with different domains of the 23S rRNA in the assembled 50S subunit and ribosome. Its function is as follows. The globular domain of the protein is located near the polypeptide exit tunnel on the outside of the subunit, while an extended beta-hairpin is found that lines the wall of the exit tunnel in the center of the 70S ribosome. This Methylorubrum extorquens (strain CM4 / NCIMB 13688) (Methylobacterium extorquens) protein is Large ribosomal subunit protein uL22.